We begin with the raw amino-acid sequence, 336 residues long: Holliday junction branch migration complex subunit RuvB (336 aa).

Residues 1–181 (MDRIVEIEKV…FGMDFRLQFY (181 aa)) are large ATPase domain (RuvB-L). ATP-binding positions include L20, R21, G62, K65, T66, T67, 128-130 (EDF), R171, Y181, and R218. T66 contacts Mg(2+). Residues 182-252 (TSSELSRIVQ…RAKEGLNALG (71 aa)) form a small ATPAse domain (RuvB-S) region. Residues 255–336 (SLGFDEMDIR…KIDIEKGLFE (82 aa)) are head domain (RuvB-H). Residues R309 and R314 each contribute to the DNA site.

It belongs to the RuvB family. In terms of assembly, homohexamer. Forms an RuvA(8)-RuvB(12)-Holliday junction (HJ) complex. HJ DNA is sandwiched between 2 RuvA tetramers; dsDNA enters through RuvA and exits via RuvB. An RuvB hexamer assembles on each DNA strand where it exits the tetramer. Each RuvB hexamer is contacted by two RuvA subunits (via domain III) on 2 adjacent RuvB subunits; this complex drives branch migration. In the full resolvosome a probable DNA-RuvA(4)-RuvB(12)-RuvC(2) complex forms which resolves the HJ.

The protein localises to the cytoplasm. It catalyses the reaction ATP + H2O = ADP + phosphate + H(+). The RuvA-RuvB-RuvC complex processes Holliday junction (HJ) DNA during genetic recombination and DNA repair, while the RuvA-RuvB complex plays an important role in the rescue of blocked DNA replication forks via replication fork reversal (RFR). RuvA specifically binds to HJ cruciform DNA, conferring on it an open structure. The RuvB hexamer acts as an ATP-dependent pump, pulling dsDNA into and through the RuvAB complex. RuvB forms 2 homohexamers on either side of HJ DNA bound by 1 or 2 RuvA tetramers; 4 subunits per hexamer contact DNA at a time. Coordinated motions by a converter formed by DNA-disengaged RuvB subunits stimulates ATP hydrolysis and nucleotide exchange. Immobilization of the converter enables RuvB to convert the ATP-contained energy into a lever motion, pulling 2 nucleotides of DNA out of the RuvA tetramer per ATP hydrolyzed, thus driving DNA branch migration. The RuvB motors rotate together with the DNA substrate, which together with the progressing nucleotide cycle form the mechanistic basis for DNA recombination by continuous HJ branch migration. Branch migration allows RuvC to scan DNA until it finds its consensus sequence, where it cleaves and resolves cruciform DNA. The sequence is that of Holliday junction branch migration complex subunit RuvB from Campylobacter concisus (strain 13826).